A 238-amino-acid chain; its full sequence is Aspartate/glutamate leucyltransferase (238 aa).

The protein belongs to the R-transferase family. Bpt subfamily.

The protein localises to the cytoplasm. It catalyses the reaction N-terminal L-glutamyl-[protein] + L-leucyl-tRNA(Leu) = N-terminal L-leucyl-L-glutamyl-[protein] + tRNA(Leu) + H(+). The catalysed reaction is N-terminal L-aspartyl-[protein] + L-leucyl-tRNA(Leu) = N-terminal L-leucyl-L-aspartyl-[protein] + tRNA(Leu) + H(+). Functionally, functions in the N-end rule pathway of protein degradation where it conjugates Leu from its aminoacyl-tRNA to the N-termini of proteins containing an N-terminal aspartate or glutamate. This chain is Aspartate/glutamate leucyltransferase, found in Shewanella sp. (strain MR-7).